The chain runs to 242 residues: Probable transcriptional regulatory protein lhv_0777 (242 aa).

The segment at 1–22 (MSGHSKWHNIQGRKNAQDAKRG) is disordered.

This sequence belongs to the TACO1 family.

The protein resides in the cytoplasm. This chain is Probable transcriptional regulatory protein lhv_0777, found in Lactobacillus helveticus (strain DPC 4571).